A 166-amino-acid chain; its full sequence is UPF0336 protein Mb0656 (166 aa).

It belongs to the UPF0336 family.

This chain is UPF0336 protein Mb0656, found in Mycobacterium bovis (strain ATCC BAA-935 / AF2122/97).